Here is a 31-residue protein sequence, read N- to C-terminus: Cliotide T10 (31 aa).

The segment at residues 1-31 (GIPCGESCVYIPCTVTALLGCSCKDKVCYKN) is a cross-link (cyclopeptide (Gly-Asn)). Cystine bridges form between cysteine 4/cysteine 21, cysteine 8/cysteine 23, and cysteine 13/cysteine 28.

In terms of processing, contains 3 disulfide bonds. This is a cyclic peptide. Expressed in seed, root and nodule but not in flower, stem, shoot, leaf and pod (at protein level).

Its function is as follows. Probably participates in a plant defense mechanism. The protein is Cliotide T10 of Clitoria ternatea (Butterfly pea).